The chain runs to 299 residues: ATP phosphoribosyltransferase (299 aa).

It belongs to the ATP phosphoribosyltransferase family. Long subfamily. Mg(2+) serves as cofactor.

It localises to the cytoplasm. It catalyses the reaction 1-(5-phospho-beta-D-ribosyl)-ATP + diphosphate = 5-phospho-alpha-D-ribose 1-diphosphate + ATP. The protein operates within amino-acid biosynthesis; L-histidine biosynthesis; L-histidine from 5-phospho-alpha-D-ribose 1-diphosphate: step 1/9. Feedback inhibited by histidine. In terms of biological role, catalyzes the condensation of ATP and 5-phosphoribose 1-diphosphate to form N'-(5'-phosphoribosyl)-ATP (PR-ATP). Has a crucial role in the pathway because the rate of histidine biosynthesis seems to be controlled primarily by regulation of HisG enzymatic activity. The polypeptide is ATP phosphoribosyltransferase (Campylobacter jejuni subsp. jejuni serotype O:6 (strain 81116 / NCTC 11828)).